Consider the following 94-residue polypeptide: Pyrimidine/purine nucleoside phosphorylase (94 aa).

Belongs to the nucleoside phosphorylase PpnP family.

The enzyme catalyses a purine D-ribonucleoside + phosphate = a purine nucleobase + alpha-D-ribose 1-phosphate. It catalyses the reaction adenosine + phosphate = alpha-D-ribose 1-phosphate + adenine. It carries out the reaction cytidine + phosphate = cytosine + alpha-D-ribose 1-phosphate. The catalysed reaction is guanosine + phosphate = alpha-D-ribose 1-phosphate + guanine. The enzyme catalyses inosine + phosphate = alpha-D-ribose 1-phosphate + hypoxanthine. It catalyses the reaction thymidine + phosphate = 2-deoxy-alpha-D-ribose 1-phosphate + thymine. It carries out the reaction uridine + phosphate = alpha-D-ribose 1-phosphate + uracil. The catalysed reaction is xanthosine + phosphate = alpha-D-ribose 1-phosphate + xanthine. Its function is as follows. Catalyzes the phosphorolysis of diverse nucleosides, yielding D-ribose 1-phosphate and the respective free bases. Can use uridine, adenosine, guanosine, cytidine, thymidine, inosine and xanthosine as substrates. Also catalyzes the reverse reactions. In Salmonella arizonae (strain ATCC BAA-731 / CDC346-86 / RSK2980), this protein is Pyrimidine/purine nucleoside phosphorylase.